A 1073-amino-acid polypeptide reads, in one-letter code: Activated Cdc42 kinase Ack (1073 aa).

The interval 88–110 (IGGGKQPSSKKQSSAARESSQGN) is disordered. In terms of domain architecture, Protein kinase spans 123–383 (ITMGLKLGDG…PTFAALKEYL (261 aa)). Residues 129-137 (LGDGSFGVV) and lysine 156 each bind ATP. Residue aspartate 250 is the Proton acceptor of the active site. In terms of domain architecture, SH3 spans 386 to 446 (MSPPVMRASR…PRNLLEQRKV (61 aa)). 3 disordered regions span residues 484–506 (QRKC…SSKQ), 803–834 (PLKN…VEAA), and 862–882 (AQPP…HQQQ). A compositionally biased stretch (low complexity) spans 812-826 (SVHSNHSSPSSTASP). The region spanning 1029 to 1072 (GLATRHYKIDQLARLGVAGRPQCEQALQQTNWSLEVAAELLLNA) is the UBA domain.

Belongs to the protein kinase superfamily. Tyr protein kinase family. In terms of assembly, interacts with yki and ex. Interacts with drk. Likely to be a member of an axonal guidance receptor complex that includes SH3PX1, dock and Dscam. Interacts (via N-terminus) with dock. Interacts with SH3PX1 (via SH3 domain). Requires Mg(2+) as cofactor. In terms of processing, phosphorylated. Autophosphorylated. In terms of tissue distribution, detected in ovaries (at protein level). In adults, relatively higher expression in the head compared to the body.

The protein localises to the cytoplasm. It localises to the cytoplasmic vesicle. The protein resides in the clathrin-coated vesicle. The enzyme catalyses L-tyrosyl-[protein] + ATP = O-phospho-L-tyrosyl-[protein] + ADP + H(+). The catalysed reaction is L-threonyl-[protein] + ATP = O-phospho-L-threonyl-[protein] + ADP + H(+). Functionally, non-receptor tyrosine-protein and serine/threonine-protein kinase that is implicated in diverse biological functions such as cell survival, cell differentiation, cell growth and proliferation. Phosphorylates SH3PX1 and ex. Phosphorylates SH3PX1 predominantly on 'Tyr-56', which likely promotes the recruitment of SH3PX1 to an axonal guidance receptor complex that includes dock and Dscam; because phosphorylation of SH3PX1 increases its interaction with the complex member dock while decreasing its interaction with the actin cytoskeleton modulator WASp. In the wing and eye, promotes tissue growth, and during embryogenesis coordinates cell shape changes required for correct dorsal closure. Functions in the negative regulation of the Hippo/SWH (Sav/Wts/Hpo) signaling pathway by enhancing yki activity thereby promoting cell proliferation and inhibiting apoptosis. This is accomplished, at least in part, by phosphorylating ex thereby reducing its ability to efficiently activate the Hippo signaling cascade. In the eye disk, wing disk and possibly spermatids, inhibits programmed cell death induced by hid and rpr through a mechanism that is independent of the MAP kinase signal transduction pathway. Essential for male and female fertility. During oogenesis required for the correct temporal assembly, and consequently the catalytic activity of long Ctps filaments (cytoophidium) in the germline nurse cells, likely by phosphorylating an unidentified substrate that is essential for linking individual Ctps filaments into large, catalytically active assemblies. The protein is Activated Cdc42 kinase Ack of Drosophila melanogaster (Fruit fly).